We begin with the raw amino-acid sequence, 341 residues long: UDP-3-O-acylglucosamine N-acyltransferase (341 aa).

Residue H239 is the Proton acceptor of the active site.

This sequence belongs to the transferase hexapeptide repeat family. LpxD subfamily. Homotrimer.

It catalyses the reaction a UDP-3-O-[(3R)-3-hydroxyacyl]-alpha-D-glucosamine + a (3R)-hydroxyacyl-[ACP] = a UDP-2-N,3-O-bis[(3R)-3-hydroxyacyl]-alpha-D-glucosamine + holo-[ACP] + H(+). The protein operates within bacterial outer membrane biogenesis; LPS lipid A biosynthesis. Its function is as follows. Catalyzes the N-acylation of UDP-3-O-acylglucosamine using 3-hydroxyacyl-ACP as the acyl donor. Is involved in the biosynthesis of lipid A, a phosphorylated glycolipid that anchors the lipopolysaccharide to the outer membrane of the cell. The sequence is that of UDP-3-O-acylglucosamine N-acyltransferase from Idiomarina loihiensis (strain ATCC BAA-735 / DSM 15497 / L2-TR).